A 257-amino-acid polypeptide reads, in one-letter code: Ditrans,polycis-undecaprenyl-diphosphate synthase ((2E,6E)-farnesyl-diphosphate specific) (257 aa).

The active site involves Asp24. Residue Asp24 participates in Mg(2+) binding. Substrate is bound by residues 25–28, Trp29, Arg37, His41, and 69–71; these read GNGR and SSE. The Proton acceptor role is filled by Asn72. Substrate is bound by residues Trp73, Arg75, Arg192, and 198 to 200; that span reads RIS. Glu211 provides a ligand contact to Mg(2+).

It belongs to the UPP synthase family. Homodimer. Requires Mg(2+) as cofactor.

It catalyses the reaction 8 isopentenyl diphosphate + (2E,6E)-farnesyl diphosphate = di-trans,octa-cis-undecaprenyl diphosphate + 8 diphosphate. In terms of biological role, catalyzes the sequential condensation of isopentenyl diphosphate (IPP) with (2E,6E)-farnesyl diphosphate (E,E-FPP) to yield (2Z,6Z,10Z,14Z,18Z,22Z,26Z,30Z,34E,38E)-undecaprenyl diphosphate (di-trans,octa-cis-UPP). UPP is the precursor of glycosyl carrier lipid in the biosynthesis of bacterial cell wall polysaccharide components such as peptidoglycan and lipopolysaccharide. The chain is Ditrans,polycis-undecaprenyl-diphosphate synthase ((2E,6E)-farnesyl-diphosphate specific) from Aliivibrio fischeri (strain ATCC 700601 / ES114) (Vibrio fischeri).